The primary structure comprises 364 residues: Phosphoserine aminotransferase (364 aa).

Arg46 contributes to the L-glutamate binding site. Residues Ala80 to Arg81, Trp106, Thr157, Asp176, and Gln199 contribute to the pyridoxal 5'-phosphate site. Lys200 carries the post-translational modification N6-(pyridoxal phosphate)lysine. Asn241–Thr242 is a binding site for pyridoxal 5'-phosphate.

The protein belongs to the class-V pyridoxal-phosphate-dependent aminotransferase family. SerC subfamily. In terms of assembly, homodimer. Pyridoxal 5'-phosphate is required as a cofactor.

Its subcellular location is the cytoplasm. It catalyses the reaction O-phospho-L-serine + 2-oxoglutarate = 3-phosphooxypyruvate + L-glutamate. It carries out the reaction 4-(phosphooxy)-L-threonine + 2-oxoglutarate = (R)-3-hydroxy-2-oxo-4-phosphooxybutanoate + L-glutamate. The protein operates within amino-acid biosynthesis; L-serine biosynthesis; L-serine from 3-phospho-D-glycerate: step 2/3. It functions in the pathway cofactor biosynthesis; pyridoxine 5'-phosphate biosynthesis; pyridoxine 5'-phosphate from D-erythrose 4-phosphate: step 3/5. Catalyzes the reversible conversion of 3-phosphohydroxypyruvate to phosphoserine and of 3-hydroxy-2-oxo-4-phosphonooxybutanoate to phosphohydroxythreonine. The protein is Phosphoserine aminotransferase of Vibrio vulnificus (strain CMCP6).